The primary structure comprises 254 residues: MQYQVDTHTHTVASSHAYSTIHDYIAVAKQKGIRLFANTDHGPAMADAPHFWHFVNLRVLPRMVDGVGILRGIEANIKNIDGEIDFFGDYLKQLDIVLAGFHEPVYPPSDKATHTEAMINTIKSGKVDIITHPGNPAYPIDIEAVARAAAEYGVALEINNSSFEVSRKGSEANCTAIAKAAKEFGTILVMGSDSHVAFSLGGFARAQAIIDEVAYPPSRLLNRSPSALLTFLAARGHETVADLIPLFSDDEPCC.

The Zn(2+) site is built by His-8, His-10, His-16, His-41, Glu-74, His-102, His-132, Asp-193, and His-195.

It belongs to the PHP family. The cofactor is Zn(2+).

The sequence is that of Probable phosphatase Shew185_1467 from Shewanella baltica (strain OS185).